The primary structure comprises 156 residues: Cyclic pyranopterin monophosphate synthase (156 aa).

Substrate contacts are provided by residues leucine 73–histidine 75 and methionine 110–glutamate 111. Residue aspartate 125 is part of the active site.

Belongs to the MoaC family. Homohexamer; trimer of dimers.

The enzyme catalyses (8S)-3',8-cyclo-7,8-dihydroguanosine 5'-triphosphate = cyclic pyranopterin phosphate + diphosphate. It participates in cofactor biosynthesis; molybdopterin biosynthesis. Its function is as follows. Catalyzes the conversion of (8S)-3',8-cyclo-7,8-dihydroguanosine 5'-triphosphate to cyclic pyranopterin monophosphate (cPMP). The polypeptide is Cyclic pyranopterin monophosphate synthase (Pseudomonas entomophila (strain L48)).